A 268-amino-acid polypeptide reads, in one-letter code: Ribosomal RNA small subunit methyltransferase A (268 aa).

Asn-23, Ile-25, Gly-50, Glu-72, Asp-97, and Asn-116 together coordinate S-adenosyl-L-methionine.

The protein belongs to the class I-like SAM-binding methyltransferase superfamily. rRNA adenine N(6)-methyltransferase family. RsmA subfamily.

The protein resides in the cytoplasm. It catalyses the reaction adenosine(1518)/adenosine(1519) in 16S rRNA + 4 S-adenosyl-L-methionine = N(6)-dimethyladenosine(1518)/N(6)-dimethyladenosine(1519) in 16S rRNA + 4 S-adenosyl-L-homocysteine + 4 H(+). Functionally, specifically dimethylates two adjacent adenosines (A1518 and A1519) in the loop of a conserved hairpin near the 3'-end of 16S rRNA in the 30S particle. May play a critical role in biogenesis of 30S subunits. This Rickettsia bellii (strain RML369-C) protein is Ribosomal RNA small subunit methyltransferase A.